A 137-amino-acid polypeptide reads, in one-letter code: Actin-depolymerizing factor 2 (137 aa).

The region spanning 5–137 (ASGMAVHDDC…GLDVFKSRTN (133 aa)) is the ADF-H domain. S6 is subject to Phosphoserine.

The protein belongs to the actin-binding proteins ADF family. In terms of assembly, interacts with AIP1-1.

It is found in the cytoplasm. It localises to the cytoskeleton. In terms of biological role, actin-depolymerizing protein. Severs actin filaments (F-actin) and binds to actin monomers. Required for normal cell growth, plant development, cell organ expansion and flowering. Essential for root-knot nematode infection. In Arabidopsis thaliana (Mouse-ear cress), this protein is Actin-depolymerizing factor 2 (ADF2).